Consider the following 962-residue polypeptide: UvrABC system protein A (962 aa).

38-45 lines the ATP pocket; it reads GISGSGKS. 2 consecutive ABC transporter domains span residues 319–597 and 617–944; these read WSKS…PDSL and PSGR…RFLR. 649–656 is an ATP binding site; the sequence is GVSGSGKS. A C4-type zinc finger spans residues 748–774; that stretch reads CEACGGDGIIKIEMHFLADVYVPCEVC.

This sequence belongs to the ABC transporter superfamily. UvrA family. In terms of assembly, forms a heterotetramer with UvrB during the search for lesions.

It is found in the cytoplasm. In terms of biological role, the UvrABC repair system catalyzes the recognition and processing of DNA lesions. UvrA is an ATPase and a DNA-binding protein. A damage recognition complex composed of 2 UvrA and 2 UvrB subunits scans DNA for abnormalities. When the presence of a lesion has been verified by UvrB, the UvrA molecules dissociate. The chain is UvrABC system protein A from Methanothermobacter thermautotrophicus (strain ATCC 29096 / DSM 1053 / JCM 10044 / NBRC 100330 / Delta H) (Methanobacterium thermoautotrophicum).